The primary structure comprises 353 residues: Photosystem II protein D1 (353 aa).

An N-acetylthreonine modification is found at T2. T2 is subject to Phosphothreonine. A run of 3 helical transmembrane segments spans residues 29–46 (YIGW…TATS), 118–133 (HFLL…EWEL), and 142–156 (WIAV…AATA). H118 provides a ligand contact to chlorophyll a. Y126 provides a ligand contact to pheophytin a. Residues D170 and E189 each coordinate [CaMn4O5] cluster. A helical membrane pass occupies residues 197-218 (FHMLGVAGVFGGSLFSAMHGSL). Residue H198 participates in chlorophyll a binding. Residues H215 and 264-265 (SF) each bind a quinone. Residue H215 participates in Fe cation binding. Residue H272 coordinates Fe cation. Residues 274–288 (FLAAWPVVGIWFTAL) form a helical membrane-spanning segment. Residues H332, E333, D342, and A344 each coordinate [CaMn4O5] cluster. Positions 345–353 (AIEAPSTNG) are excised as a propeptide.

It belongs to the reaction center PufL/M/PsbA/D family. In terms of assembly, PSII is composed of 1 copy each of membrane proteins PsbA, PsbB, PsbC, PsbD, PsbE, PsbF, PsbH, PsbI, PsbJ, PsbK, PsbL, PsbM, PsbT, PsbX, PsbY, PsbZ, Psb30/Ycf12, at least 3 peripheral proteins of the oxygen-evolving complex and a large number of cofactors. It forms dimeric complexes. Requires The D1/D2 heterodimer binds P680, chlorophylls that are the primary electron donor of PSII, and subsequent electron acceptors. It shares a non-heme iron and each subunit binds pheophytin, quinone, additional chlorophylls, carotenoids and lipids. D1 provides most of the ligands for the Mn4-Ca-O5 cluster of the oxygen-evolving complex (OEC). There is also a Cl(-1) ion associated with D1 and D2, which is required for oxygen evolution. The PSII complex binds additional chlorophylls, carotenoids and specific lipids. as cofactor. Tyr-161 forms a radical intermediate that is referred to as redox-active TyrZ, YZ or Y-Z. In terms of processing, C-terminally processed by CTPA; processing is essential to allow assembly of the oxygen-evolving complex and thus photosynthetic growth.

The protein localises to the plastid. It is found in the chloroplast thylakoid membrane. The enzyme catalyses 2 a plastoquinone + 4 hnu + 2 H2O = 2 a plastoquinol + O2. Its function is as follows. Photosystem II (PSII) is a light-driven water:plastoquinone oxidoreductase that uses light energy to abstract electrons from H(2)O, generating O(2) and a proton gradient subsequently used for ATP formation. It consists of a core antenna complex that captures photons, and an electron transfer chain that converts photonic excitation into a charge separation. The D1/D2 (PsbA/PsbD) reaction center heterodimer binds P680, the primary electron donor of PSII as well as several subsequent electron acceptors. This is Photosystem II protein D1 from Citrus sinensis (Sweet orange).